Here is a 453-residue protein sequence, read N- to C-terminus: Sensor histidine kinase CpxA (453 aa).

Residues 1–4 lie on the Cytoplasmic side of the membrane; sequence MTAR. The chain crosses the membrane as a helical span at residues 5-25; the sequence is IFAIFWLTLALVLMLVLMLPK. At 26 to 159 the chain is on the periplasmic side; the sequence is LDSRQMTELL…SDFINLLFDR (134 aa). The chain crosses the membrane as a helical span at residues 160-180; the sequence is PLLLLIVTMLVSAPLLLWLAW. The HAMP domain maps to 180 to 233; it reads WSLAKPARKLKNAADEVAQGNLRQHPELEAGPQEFLAAGASFNQMVTALERMMT. The Cytoplasmic segment spans residues 181–453; the sequence is SLAKPARKLK…TIWLPLYKRT (273 aa). Positions 241–451 constitute a Histidine kinase domain; sequence DISHELRTPL…RLTIWLPLYK (211 aa). The active-site Nucleophile is the His-244. At His-244 the chain carries Phosphohistidine; by autocatalysis. ATP is bound by residues 244–247, 355–360, Asp-382, 401–402, and 412–417; these read HELR, RNALRY, RT, and GTGLGL.

Interacts with cognate response regulator CpxR.

The protein resides in the cell inner membrane. It catalyses the reaction ATP + protein L-histidine = ADP + protein N-phospho-L-histidine.. With respect to regulation, the two-component system is activated by envelope stress such as overexpression of some (misfolded) periplasmic proteins. Functionally, histidine kinase member of the two-component regulatory system CpxA/CpxR which responds to envelope stress response by activating or, in some cases, repressing expression of downstream genes. Activates CpxR by phosphorylation. The sequence is that of Sensor histidine kinase CpxA from Klebsiella pneumoniae subsp. pneumoniae (strain HS11286).